The chain runs to 23 residues: Ascaphin-1 (23 aa).

Asn23 is subject to Asparagine amide.

As to expression, expressed by the skin glands.

It is found in the secreted. Its function is as follows. Antimicrobial peptide that shows higher potency against Gram-negative bacteria than against Gram-positive bacteria. Has a very week hemolytic activity. The chain is Ascaphin-1 from Ascaphus truei (Coastal tailed frog).